The primary structure comprises 73 residues: Mu-scoloptoxin(15)-Ssd1a (73 aa).

Positions 1-20 (MKFHIIFCLLAALMMTSAFA) are cleaved as a signal peptide.

In terms of processing, contains 2 disulfide bonds. As to expression, expressed by the venom gland.

It localises to the secreted. Voltage-gated sodium channel inhibitor. This is Mu-scoloptoxin(15)-Ssd1a from Scolopendra dehaani (Thai centipede).